The chain runs to 439 residues: MQSYFDELEQVRYEGSQNTNPLAFHHYNPDEIILGKRMADHLRFAACYWHTFCWGGADMFGSNAFERPWQQSGDALALAKRKADVAFEFFHKLNVPYYCFHDVDVSPEGASLKEYLNNFAVMTDVLAEKQASSGVKLLWGTANCFTHPRYGAGAATNPDPEVFSWAATQVFTAMNATQKLGGENYVLWGGREGYETLLNTDLRQEREQIGRFMQMVVEHKHKTGFQGTLLIEPKPQEPTKHQYDYDVATVYGFLKQFGLEKEIKVNIEANHATLAGHSFHHEIASAIALGIFGSVDANRGDPQLGWDTDQFPNSVEENALVMFEILKAGGFTTGGLNFDAKVRRQSTDKYDLFYGHIGAMDTMALALKIAAKMIEDGQLDKQVAERYAGWSSDLGQQILKGKMSLEDLASYAEQHNLNPHHQSGHQELLENRVNRYIFG.

Residues histidine 101 and aspartate 104 contribute to the active site. Residues glutamate 232, glutamate 268, histidine 271, aspartate 296, aspartate 307, aspartate 309, and aspartate 339 each coordinate Mg(2+).

This sequence belongs to the xylose isomerase family. As to quaternary structure, homotetramer. Requires Mg(2+) as cofactor.

The protein localises to the cytoplasm. The enzyme catalyses alpha-D-xylose = alpha-D-xylulofuranose. The sequence is that of Xylose isomerase from Yersinia enterocolitica serotype O:8 / biotype 1B (strain NCTC 13174 / 8081).